The following is a 469-amino-acid chain: Signal recognition particle 54 kDa protein (469 aa).

GTP contacts are provided by residues 104 to 111, 184 to 188, and 242 to 245; these read GLYGSGKT, DTAGR, and TKLD. Disordered regions lie at residues 388 to 410 and 447 to 469; these read ELEN…SGKP and QQGG…PFGD. Gly residues predominate over residues 448 to 469; it reads QGGGGGGGMGGMGGGGMGPFGD.

Belongs to the GTP-binding SRP family. SRP54 subfamily. In terms of assembly, part of the signal recognition particle protein translocation system, which is composed of SRP and FtsY. Archaeal SRP consists of a 7S RNA molecule of 300 nucleotides and two protein subunits: SRP54 and SRP19.

Its subcellular location is the cytoplasm. It catalyses the reaction GTP + H2O = GDP + phosphate + H(+). Its function is as follows. Involved in targeting and insertion of nascent membrane proteins into the cytoplasmic membrane. Binds to the hydrophobic signal sequence of the ribosome-nascent chain (RNC) as it emerges from the ribosomes. The SRP-RNC complex is then targeted to the cytoplasmic membrane where it interacts with the SRP receptor FtsY. This chain is Signal recognition particle 54 kDa protein, found in Haloarcula marismortui (strain ATCC 43049 / DSM 3752 / JCM 8966 / VKM B-1809) (Halobacterium marismortui).